Consider the following 87-residue polypeptide: Translation initiation factor IF-1 2 (87 aa).

In terms of domain architecture, S1-like spans 1 to 72; that stretch reads MAKEELLELD…TKGRINFRHK (72 aa).

Belongs to the IF-1 family. In terms of assembly, component of the 30S ribosomal translation pre-initiation complex which assembles on the 30S ribosome in the order IF-2 and IF-3, IF-1 and N-formylmethionyl-tRNA(fMet); mRNA recruitment can occur at any time during PIC assembly.

It localises to the cytoplasm. One of the essential components for the initiation of protein synthesis. Stabilizes the binding of IF-2 and IF-3 on the 30S subunit to which N-formylmethionyl-tRNA(fMet) subsequently binds. Helps modulate mRNA selection, yielding the 30S pre-initiation complex (PIC). Upon addition of the 50S ribosomal subunit IF-1, IF-2 and IF-3 are released leaving the mature 70S translation initiation complex. The protein is Translation initiation factor IF-1 2 of Burkholderia ambifaria (strain ATCC BAA-244 / DSM 16087 / CCUG 44356 / LMG 19182 / AMMD) (Burkholderia cepacia (strain AMMD)).